The following is a 539-amino-acid chain: Chaperonin GroEL 1 (539 aa).

ATP is bound by residues 29–32 (TLGP), 86–90 (DGTTT), G413, and D493.

Belongs to the chaperonin (HSP60) family. As to quaternary structure, forms a cylinder of 14 subunits composed of two heptameric rings stacked back-to-back. Interacts with the co-chaperonin GroES.

The protein localises to the cytoplasm. It carries out the reaction ATP + H2O + a folded polypeptide = ADP + phosphate + an unfolded polypeptide.. Its function is as follows. Together with its co-chaperonin GroES, plays an essential role in assisting protein folding. The GroEL-GroES system forms a nano-cage that allows encapsulation of the non-native substrate proteins and provides a physical environment optimized to promote and accelerate protein folding. The chain is Chaperonin GroEL 1 from Acidothermus cellulolyticus (strain ATCC 43068 / DSM 8971 / 11B).